The chain runs to 123 residues: Large ribosomal subunit protein bL17 (123 aa).

It belongs to the bacterial ribosomal protein bL17 family. Part of the 50S ribosomal subunit. Contacts protein L32.

In Mycoplasma genitalium (strain ATCC 33530 / DSM 19775 / NCTC 10195 / G37) (Mycoplasmoides genitalium), this protein is Large ribosomal subunit protein bL17.